We begin with the raw amino-acid sequence, 215 residues long: Ras-related protein Rab-5A (215 aa).

Positions 29, 30, 32, 33, 34, 35, 46, 47, 52, and 78 each coordinate GTP. Ser34 provides a ligand contact to Mg(2+). Short sequence motifs (switch) lie at residues 44–56 and 77–93; these read QFHE…IGAA and AGQE…YRGA. Mg(2+) is bound at residue Thr52. Ser84 bears the Phosphoserine mark. Asn133, Lys134, Asp136, Ala164, and Lys165 together coordinate GTP. Residues 181–215 form a disordered region; sequence LPKNEPQNPGANSARGRGVDLTEPTQPTRSQCCSN. Over residues 203-215 the composition is skewed to polar residues; the sequence is EPTQPTRSQCCSN. Residues Cys212 and Cys213 are each lipidated (S-geranylgeranyl cysteine).

The protein belongs to the small GTPase superfamily. Rab family. Interacts with GDI1; this promotes dissociation from membranes; phosphorylation at Ser-84 disrupts this interaction. Interacts with GDI2; phosphorylation at Ser-84 disrupts the interaction. Binds EEA1. Interacts with ALS2CL, SUN2, ZFYVE20 and RUFY1. Interacts with RIN1 and GAPVD1, which regulate its pathway, probably by acting as a GEF. Interacts with SGSM1 and SGSM3. Interacts with PIK3CB. Interacts with RABEP1 and RINL. Interacts with OCRL and INPP5F. May be a component of a complex composed of RAB5A, DYN2 and PIK3C3. Does not interact with the BLOC-3 complex (heterodimer of HPS1 and HPS4). Interacts with CLN5. Interacts with APPL2. Interacts with F8A1/F8A2/F8A3. Found in a complex with F8A1/F8A2/F8A3, HTT and RAB5A; mediates the recruitment of HTT by RAB5A onto early endosomes. Interacts with ATP9A. Interacts with PPP1R21; mediates the recruitment of FERRY complex by RAB5A onto early endosomes. Mg(2+) is required as a cofactor. Post-translationally, phosphorylation of Ser-84 in the switch II region by LRRK2 prevents the association of RAB regulatory proteins, including RAB GDP dissociation inhibitors GDI1 and GDI2.

Its subcellular location is the cell membrane. It localises to the early endosome membrane. The protein resides in the melanosome. The protein localises to the cytoplasmic vesicle. It is found in the cell projection. Its subcellular location is the ruffle. It localises to the cytoplasm. The protein resides in the cytosol. The protein localises to the membrane. It is found in the phagosome membrane. Its subcellular location is the endosome membrane. The catalysed reaction is GTP + H2O = GDP + phosphate + H(+). With respect to regulation, regulated by guanine nucleotide exchange factors (GEFs) including RINL, which promote the exchange of bound GDP for free GTP. Regulated by GTPase activating proteins (GAPs) which increase the GTP hydrolysis activity. Inhibited by GDP dissociation inhibitors (GDIs). The small GTPases Rab are key regulators of intracellular membrane trafficking, from the formation of transport vesicles to their fusion with membranes. Rabs cycle between an inactive GDP-bound form and an active GTP-bound form that is able to recruit to membranes different sets of downstream effectors directly responsible for vesicle formation, movement, tethering and fusion. RAB5A is required for the fusion of plasma membranes and early endosomes. Contributes to the regulation of filopodia extension. Required for the exosomal release of SDCBP, CD63, PDCD6IP and syndecan. Regulates maturation of apoptotic cell-containing phagosomes, probably downstream of DYN2 and PIK3C3. This Canis lupus familiaris (Dog) protein is Ras-related protein Rab-5A (RAB5A).